The chain runs to 502 residues: MVQCKPPQEFSFGPRALKDALISCDLALKQMYTSAFSPSERLFLSEAYNPNRTLFSTLLIHSAYDWLLSRPEAPEDFETFHASLQLRKQSLARKHIYLQPIDLSEGLAGCPLLDHLRSCAEAFFLGLRVKCLPSVAAASINCCSRPSRDTDGLQLHTDGILSFLKNNKPGDALCVLGLTLADLYPHDAWTFTFGRFLPGHEVGVCSFARFSGEFLQAGSSVPDSALLEAAAAGGPETLPRERGRTLCFSALGMVQCCKVTCHELCHLLGLGSCRWLRCLLQGALSLDEVLRRPLDLCPICLRKLHHLLGFRLLERYKRLHAWTRVMVEIWSGQEAGEPSVSEDTLPFSADSGMGCESDTEPVTSPSEPVTPDGWSHPFPDGPEPVSEDGLGSLMASEVSLTLGGPVDAMEEYGQWLTACIQTLEREGAEEELLQVDAAVDALSRWEMFTGQLPVTKQHVPCGKDNVGLRRVLGDKFSSLRRRLSSRRFAKASSSHCRWGAEN.

Residue histidine 262 coordinates Zn(2+). The active-site Proton acceptor is the glutamate 263. Residues histidine 266, cysteine 273, cysteine 278, cysteine 297, and cysteine 300 each coordinate Zn(2+). Residues 336–383 (GEPSVSEDTLPFSADSGMGCESDTEPVTSPSEPVTPDGWSHPFPDGPE) form a disordered region.

Belongs to the peptidase M54 family. It depends on Zn(2+) as a cofactor.

In terms of biological role, probable zinc metalloprotease. This Mus musculus (Mouse) protein is Archaemetzincin-1 (Amz1).